The sequence spans 182 residues: UPF0301 protein NMCC_1249 (182 aa).

This sequence belongs to the UPF0301 (AlgH) family.

This Neisseria meningitidis serogroup C (strain 053442) protein is UPF0301 protein NMCC_1249.